The chain runs to 428 residues: Tyrosine--tRNA ligase (428 aa).

Tyr41 is an L-tyrosine binding site. The 'HIGH' region signature appears at 46–55 (PTADSLHLGH). The L-tyrosine site is built by Tyr179 and Gln183. The short motif at 239-243 (KFGKT) is the 'KMSKS' region element. Lys242 is a binding site for ATP. Residues 361–418 (ADLMQALVDSELQPSRGQARKTIASNAITINGEKQSDPEYTFSDSDRLFGRYTLLRRG) enclose the S4 RNA-binding domain.

This sequence belongs to the class-I aminoacyl-tRNA synthetase family. TyrS type 1 subfamily. In terms of assembly, homodimer.

The protein localises to the cytoplasm. The catalysed reaction is tRNA(Tyr) + L-tyrosine + ATP = L-tyrosyl-tRNA(Tyr) + AMP + diphosphate + H(+). In terms of biological role, catalyzes the attachment of tyrosine to tRNA(Tyr) in a two-step reaction: tyrosine is first activated by ATP to form Tyr-AMP and then transferred to the acceptor end of tRNA(Tyr). The chain is Tyrosine--tRNA ligase from Cronobacter sakazakii (strain ATCC BAA-894) (Enterobacter sakazakii).